The following is a 92-amino-acid chain: Evasin P675 (92 aa).

Residues 1 to 24 (MEVKTFAFLQIAVIIALGLHLAPA) form the signal peptide. Cystine bridges form between Cys-44–Cys-63, Cys-48–Cys-65, and Cys-59–Cys-76. N-linked (GlcNAc...) asparagine glycosylation occurs at Asn-47. The N-linked (GlcNAc...) asparagine glycan is linked to Asn-70.

It is found in the secreted. In terms of biological role, salivary chemokine-binding protein which binds to host chemokines CXCL1, CXCL2, CXCL3, CXCL4, CXCL5, CXCL6, CXCL10, CXCL11 and CXCL13. The chain is Evasin P675 from Ixodes ricinus (Common tick).